We begin with the raw amino-acid sequence, 29 residues long: Cytochrome b6-f complex subunit 8 (29 aa).

The chain crosses the membrane as a helical span at residues 3–23 (IVNIAWAALMVVSTFSLTLVV).

The protein belongs to the PetN family. In terms of assembly, the 4 large subunits of the cytochrome b6-f complex are cytochrome b6, subunit IV (17 kDa polypeptide, PetD), cytochrome f and the Rieske protein, while the 4 small subunits are PetG, PetL, PetM and PetN. The complex functions as a dimer.

The protein localises to the plastid. It is found in the chloroplast thylakoid membrane. Its function is as follows. Component of the cytochrome b6-f complex, which mediates electron transfer between photosystem II (PSII) and photosystem I (PSI), cyclic electron flow around PSI, and state transitions. This is Cytochrome b6-f complex subunit 8 from Huperzia lucidula (Shining clubmoss).